Here is a 288-residue protein sequence, read N- to C-terminus: Formamidopyrimidine-DNA glycosylase (288 aa).

The active-site Schiff-base intermediate with DNA is P2. E3 (proton donor) is an active-site residue. Residue K59 is the Proton donor; for beta-elimination activity of the active site. Positions 93, 112, and 168 each coordinate DNA. The FPG-type zinc-finger motif lies at 254–288 (NVYGRGGEPCKRCGAPIKRVVVGGRSTHYCATCQR). The Proton donor; for delta-elimination activity role is filled by R278.

This sequence belongs to the FPG family. As to quaternary structure, monomer. The cofactor is Zn(2+).

The enzyme catalyses Hydrolysis of DNA containing ring-opened 7-methylguanine residues, releasing 2,6-diamino-4-hydroxy-5-(N-methyl)formamidopyrimidine.. It carries out the reaction 2'-deoxyribonucleotide-(2'-deoxyribose 5'-phosphate)-2'-deoxyribonucleotide-DNA = a 3'-end 2'-deoxyribonucleotide-(2,3-dehydro-2,3-deoxyribose 5'-phosphate)-DNA + a 5'-end 5'-phospho-2'-deoxyribonucleoside-DNA + H(+). In terms of biological role, involved in base excision repair of DNA damaged by oxidation or by mutagenic agents. Acts as a DNA glycosylase that recognizes and removes damaged bases. Has a preference for oxidized purines, such as 7,8-dihydro-8-oxoguanine (8-oxoG). Has AP (apurinic/apyrimidinic) lyase activity and introduces nicks in the DNA strand. Cleaves the DNA backbone by beta-delta elimination to generate a single-strand break at the site of the removed base with both 3'- and 5'-phosphates. The sequence is that of Formamidopyrimidine-DNA glycosylase from Corynebacterium jeikeium (strain K411).